Consider the following 799-residue polypeptide: Protein translocase subunit SecA (799 aa).

ATP contacts are provided by residues glutamine 85, 103–107 (GEGKT), and aspartate 504.

The protein belongs to the SecA family. As to quaternary structure, monomer and homodimer. Part of the essential Sec protein translocation apparatus which comprises SecA, SecYEG and auxiliary proteins SecDF. Other proteins may also be involved.

The protein resides in the cell membrane. It localises to the cytoplasm. It catalyses the reaction ATP + H2O + cellular proteinSide 1 = ADP + phosphate + cellular proteinSide 2.. Functionally, part of the Sec protein translocase complex. Interacts with the SecYEG preprotein conducting channel. Has a central role in coupling the hydrolysis of ATP to the transfer of proteins into and across the cell membrane, serving as an ATP-driven molecular motor driving the stepwise translocation of polypeptide chains across the membrane. This is Protein translocase subunit SecA from Lactobacillus acidophilus (strain ATCC 700396 / NCK56 / N2 / NCFM).